Here is a 319-residue protein sequence, read N- to C-terminus: Ataxin-3 homolog (319 aa).

Positions 8 to 179 (ISSIFFERQQ…NSEADDFITL (172 aa)) constitute a Josephin domain. Cys-21 functions as the Nucleophile in the catalytic mechanism. The active-site Proton acceptor is His-118. Residue Asn-133 is part of the active site. UIM domains follow at residues 218–237 (QEDR…KESS) and 242–261 (SDED…DPNI). Positions 253–319 (MSLSQDPNIP…EKKSQNVPEE (67 aa)) are disordered. Positions 254 to 267 (SLSQDPNIPSTSAA) are enriched in polar residues. Basic and acidic residues predominate over residues 295–313 (QQRRDRAKFLEKLEEEKKS). Residues 297 to 300 (RRDR) are interaction with cdc-48.1 and cdc-48.2.

Forms a complex composed of deubiquitinating enzyme atx-3, adapter ubxn-5 and cdc-48.1. Forms a complex composed of deubiquitinating enzyme atx-3, E4 ubiquitin-protein ligase ufd-2 and cdc-48.1. Interacts (via RRDR motif) with cdc-48.1 (via N-terminus) and cdc-48.2 (via N-terminus); the interaction with cdc-48.1 is not required for atx-3 enzymatic activity. Interacts (via C-terminus) with ubxn-5. May interact with ned-8.

The protein resides in the cytoplasm. It localises to the nucleus. The protein localises to the nucleolus. It carries out the reaction Thiol-dependent hydrolysis of ester, thioester, amide, peptide and isopeptide bonds formed by the C-terminal Gly of ubiquitin (a 76-residue protein attached to proteins as an intracellular targeting signal).. Its function is as follows. Acts as a chain editing deubiquitinating enzyme that binds and cleaves 'Lys-48'-linked polyubiquitin chains, with a preference for chains containing four or more ubiquitin molecules thereby modulating protein degradation by the ubiquitin-proteasome pathway. Probably by regulating the IGF-1-insulin-like pathway, regulates lifespan. Regulates germline DNA double-strand-break repair and apoptosis in response to DNA damage by recruiting E4 ubiquitin-protein ligase ufd-2 to DNA repair foci. Interacts with key regulators of transcription and represses transcription. Acts as a histone-binding protein that regulates transcription. This chain is Ataxin-3 homolog, found in Caenorhabditis briggsae.